Reading from the N-terminus, the 546-residue chain is Chaperonin GroEL 6 (546 aa).

ATP-binding positions include 30–33 (TLGP), Lys51, 87–91 (DGTTT), Gly415, and Asp496.

This sequence belongs to the chaperonin (HSP60) family. Forms a cylinder of 14 subunits composed of two heptameric rings stacked back-to-back. Interacts with the co-chaperonin GroES.

The protein resides in the cytoplasm. It carries out the reaction ATP + H2O + a folded polypeptide = ADP + phosphate + an unfolded polypeptide.. Functionally, together with its co-chaperonin GroES, plays an essential role in assisting protein folding. The GroEL-GroES system forms a nano-cage that allows encapsulation of the non-native substrate proteins and provides a physical environment optimized to promote and accelerate protein folding. The protein is Chaperonin GroEL 6 of Bradyrhizobium diazoefficiens (strain JCM 10833 / BCRC 13528 / IAM 13628 / NBRC 14792 / USDA 110).